A 66-amino-acid chain; its full sequence is Large ribosomal subunit protein bL31 (66 aa).

The Zn(2+) site is built by Cys-16, Cys-18, Cys-36, and Cys-39.

This sequence belongs to the bacterial ribosomal protein bL31 family. Type A subfamily. As to quaternary structure, part of the 50S ribosomal subunit. Zn(2+) serves as cofactor.

Binds the 23S rRNA. The polypeptide is Large ribosomal subunit protein bL31 (Campylobacter jejuni subsp. jejuni serotype O:6 (strain 81116 / NCTC 11828)).